Here is a 217-residue protein sequence, read N- to C-terminus: PRELI domain-containing protein 1, mitochondrial (217 aa).

The PRELI/MSF1 domain occupies 36–174; that stretch reads TEDIVHREVT…ILAKLQGEAP (139 aa).

Forms a complex with TRIAP1 in the mitochondrion intermembrane space. Interacts with OPA1 and AIFM1. Abundantly expressed in all tissues tested except testis with highest levels in thymus.

The protein localises to the mitochondrion. It localises to the mitochondrion intermembrane space. It catalyses the reaction a 1,2-diacyl-sn-glycero-3-phosphate(in) = a 1,2-diacyl-sn-glycero-3-phosphate(out). In terms of biological role, involved in the modulation of the mitochondrial apoptotic pathway by ensuring the accumulation of cardiolipin (CL) in mitochondrial membranes. In vitro, the TRIAP1:PRELID1 complex mediates the transfer of phosphatidic acid (PA) between liposomes and probably functions as a PA transporter across the mitochondrion intermembrane space to provide PA for CL synthesis in the inner membrane. Regulates the mitochondrial apoptotic pathway in primary Th cells. Regulates Th cell differentiation by down-regulating STAT6 thereby reducing IL-4-induced Th2 cell number. May be important for the development of vital and immunocompetent organs. The chain is PRELI domain-containing protein 1, mitochondrial (Prelid1) from Mus musculus (Mouse).